The following is a 130-amino-acid chain: ATP synthase epsilon chain (130 aa).

It belongs to the ATPase epsilon chain family. In terms of assembly, F-type ATPases have 2 components, CF(1) - the catalytic core - and CF(0) - the membrane proton channel. CF(1) has five subunits: alpha(3), beta(3), gamma(1), delta(1), epsilon(1). CF(0) has three main subunits: a, b and c.

It localises to the cell membrane. Functionally, produces ATP from ADP in the presence of a proton gradient across the membrane. In Mycoplasmoides gallisepticum (strain R(low / passage 15 / clone 2)) (Mycoplasma gallisepticum), this protein is ATP synthase epsilon chain (atpC).